A 267-amino-acid chain; its full sequence is Cilia- and flagella-associated protein 300 (267 aa).

Belongs to the CFAP300 family. In terms of assembly, interacts with DNAAF2.

The protein localises to the cytoplasm. Its subcellular location is the cytoskeleton. The protein resides in the cilium axoneme. In terms of biological role, cilium- and flagellum-specific protein that plays a role in axonemal structure organization and motility. May play a role in outer and inner dynein arm assembly. The chain is Cilia- and flagella-associated protein 300 from Bos taurus (Bovine).